Consider the following 566-residue polypeptide: Rho GTPase-activating protein gacH (566 aa).

Disordered stretches follow at residues 1–56 (MSGV…SGAT), 65–84 (LLKQQQQPNHSITTNNNNNK), 128–168 (SEDE…SAHS), and 322–366 (KPQV…NSKN). A compositionally biased stretch (low complexity) spans 14–35 (SSTTATTTGSSKSSLNISKSVS). A compositionally biased stretch (polar residues) spans 36–56 (PTGNKAVSPMSSPNSLQSGAT). Residues 65-83 (LLKQQQQPNHSITTNNNNN) show a composition bias toward low complexity. Over residues 130 to 141 (DEYEDDEDEDEN) the composition is skewed to acidic residues. Positions 142 to 160 (NNSVNNNSNNNSNNNNNNN) are enriched in low complexity. Polar residues predominate over residues 327-337 (KSPQSSGSLST). Residues 345–356 (SSSLQRSRSVSQ) are compositionally biased toward low complexity. The 196-residue stretch at 369–564 (GSLDTILEKE…LLIENYNLFY (196 aa)) folds into the Rho-GAP domain.

It is found in the cytoplasm. Its function is as follows. Rho GTPase-activating protein involved in the signal transduction pathway. The polypeptide is Rho GTPase-activating protein gacH (gacH) (Dictyostelium discoideum (Social amoeba)).